Reading from the N-terminus, the 154-residue chain is Sec-independent protein translocase protein TatB (154 aa).

Residues 1-21 form a helical membrane-spanning segment; it reads MIDIGITKLAIIGGIALIVIG.

This sequence belongs to the TatB family. In terms of assembly, the Tat system comprises two distinct complexes: a TatABC complex, containing multiple copies of TatA, TatB and TatC subunits, and a separate TatA complex, containing only TatA subunits. Substrates initially bind to the TatABC complex, which probably triggers association of the separate TatA complex to form the active translocon.

It localises to the cell inner membrane. Its function is as follows. Part of the twin-arginine translocation (Tat) system that transports large folded proteins containing a characteristic twin-arginine motif in their signal peptide across membranes. Together with TatC, TatB is part of a receptor directly interacting with Tat signal peptides. TatB may form an oligomeric binding site that transiently accommodates folded Tat precursor proteins before their translocation. This Albidiferax ferrireducens (strain ATCC BAA-621 / DSM 15236 / T118) (Rhodoferax ferrireducens) protein is Sec-independent protein translocase protein TatB.